The chain runs to 137 residues: Methylglyoxal synthase (137 aa).

The MGS-like domain maps to 1 to 137; that stretch reads MNIALVAHDK…KLSHNDEPPA (137 aa). Residues His-8, Lys-12, 34–37, and 54–55 contribute to the substrate site; these read TGTT and SG. The active-site Proton donor/acceptor is the Asp-60. His-87 is a substrate binding site.

The protein belongs to the methylglyoxal synthase family.

It carries out the reaction dihydroxyacetone phosphate = methylglyoxal + phosphate. Its function is as follows. Catalyzes the formation of methylglyoxal from dihydroxyacetone phosphate. The polypeptide is Methylglyoxal synthase (Exiguobacterium sp. (strain ATCC BAA-1283 / AT1b)).